The primary structure comprises 5005 residues: Bridge-like lipid transfer protein family member 1 (5005 aa).

A helical membrane pass occupies residues 27-47; sequence VVWLLVATILSCGWIIYLTYY. Disordered stretches follow at residues 692–718 and 1205–1314; these read RPAQ…PSEL and KSVG…ASVC. Positions 708–718 are enriched in pro residues; sequence SPRPPVDPSEL. The segment covering 1205 to 1215 has biased composition (basic and acidic residues); it reads KSVGIEGERKT. A compositionally biased stretch (low complexity) spans 1226 to 1240; the sequence is SHSSSSSSEENSSSS. Residues 1248–1275 are compositionally biased toward basic and acidic residues; it reads GEKESPSSAADDHSVQKDLLHSARRDDG. The span at 1278–1303 shows a compositional bias: polar residues; sequence SVPTEISGTSPVSPNTQDKSVGQSPL. Ser1301, Ser1305, and Ser1323 each carry phosphoserine. Thr1325 is subject to Phosphothreonine. Disordered regions lie at residues 1343–1376, 1399–1425, 1521–1544, and 1676–1698; these read SDVS…SNSF, EEFE…QMQQ, TNKR…SEES, and FSEN…MIGT. Ser1355 and Ser1406 each carry phosphoserine. Residues 1521–1530 show a composition bias toward basic residues; sequence TNKRTSKSSL. Positions 1684–1693 are enriched in basic and acidic residues; sequence QDIRGTKTEH. Phosphoserine is present on residues Ser1805 and Ser1808. Disordered stretches follow at residues 1927 to 1991, 2165 to 2192, 2265 to 2288, 2367 to 2387, 2400 to 2420, and 2598 to 2677; these read RGGV…PLMP, PAQP…GGLQ, TSGD…KESP, ESPV…PNLP, SSDQ…QDDV, and TAGS…KDVV. Composition is skewed to polar residues over residues 1931 to 1948 and 1959 to 1971; these read LTSN…YNTD and TSPS…NSVS. Polar residues-rich tracts occupy residues 2367–2379, 2400–2418, and 2598–2608; these read ESPV…NSLP, SSDQ…TSQD, and TAGSASPTPTF. A phosphoserine mark is found at Ser2601 and Ser2603. A compositionally biased stretch (low complexity) spans 2619–2638; sequence SDFSRSSRGSLNGGNRVNNA. A compositionally biased stretch (basic and acidic residues) spans 2643–2665; the sequence is ANNENNKKESRNKNSLGRSERRT. Position 2755 is a phosphoserine (Ser2755). Residues 2928 to 2967 are disordered; it reads RQPSTAPQPMKEDIATPLPSEKTPTSVNQTPIETNEFPQL. The segment covering 2949-2964 has biased composition (polar residues); it reads KTPTSVNQTPIETNEF. Phosphoserine occurs at positions 3562, 3577, and 3653. Disordered regions lie at residues 3614-3662, 3686-3744, 3821-3843, 3935-3954, 4089-4145, and 4325-4396; these read YSRS…TFNI, SSNS…ERFY, RRSY…KKFQ, KTNT…KGKG, TTYP…SSSS, and QSAS…ASQQ. Over residues 3686–3711 the composition is skewed to polar residues; that stretch reads SSNSEGSCSVFSSPKTTGGFSPSVPF. Acidic residues predominate over residues 3727 to 3736; sequence EDSEKDEKDE. A compositionally biased stretch (basic and acidic residues) spans 3821–3837; sequence RRSYDRSSRSLDQDSPS. Residues 4097–4112 are compositionally biased toward polar residues; the sequence is SPGSNAPQTGAKTSAS. Residues 4117–4145 show a composition bias toward low complexity; that stretch reads PGSSGLGSPLGRSRHSSSQSDLTGSSSSS. A Phosphoserine modification is found at Ser4124. The span at 4325–4358 shows a compositional bias: polar residues; the sequence is QSASFTHMPQSPNVFNEHMTNNTMSPGTAAQSLK. Residues 4359 to 4372 are compositionally biased toward low complexity; sequence SPASIRSRSVSDSS. The segment covering 4381–4396 has biased composition (polar residues); it reads KTSTPVNKSNKAASQQ.

Highly expressed in testis and ovary. Weakly or not expressed in other tissues.

Its subcellular location is the cell membrane. It localises to the endoplasmic reticulum membrane. It is found in the mitochondrion membrane. Its function is as follows. Tube-forming lipid transport protein which provides phosphatidylethanolamine for glycosylphosphatidylinositol (GPI) anchor synthesis in the endoplasmic reticulum. Plays a role in endosomal trafficking and endosome recycling. Also involved in the actin cytoskeleton and cilia structural dynamics. Acts as a regulator of phagocytosis. This is Bridge-like lipid transfer protein family member 1 (Bltp1) from Mus musculus (Mouse).